A 435-amino-acid polypeptide reads, in one-letter code: Gamma-glutamyl phosphate reductase (435 aa).

It belongs to the gamma-glutamyl phosphate reductase family.

Its subcellular location is the cytoplasm. It carries out the reaction L-glutamate 5-semialdehyde + phosphate + NADP(+) = L-glutamyl 5-phosphate + NADPH + H(+). Its pathway is amino-acid biosynthesis; L-proline biosynthesis; L-glutamate 5-semialdehyde from L-glutamate: step 2/2. Its function is as follows. Catalyzes the NADPH-dependent reduction of L-glutamate 5-phosphate into L-glutamate 5-semialdehyde and phosphate. The product spontaneously undergoes cyclization to form 1-pyrroline-5-carboxylate. In Synechococcus sp. (strain WH7803), this protein is Gamma-glutamyl phosphate reductase.